The following is a 211-amino-acid chain: Large ribosomal subunit protein eL13 (211 aa).

Position 16 is an N6-acetyllysine (lysine 16). Residues serine 52 and serine 77 each carry the phosphoserine modification. Residues lysine 123 and lysine 145 each participate in a glycyl lysine isopeptide (Lys-Gly) (interchain with G-Cter in SUMO2) cross-link. A Glycyl lysine isopeptide (Lys-Gly) (interchain with G-Cter in SUMO1); alternate cross-link involves residue lysine 174. Residues lysine 174 and lysine 177 each participate in a glycyl lysine isopeptide (Lys-Gly) (interchain with G-Cter in SUMO2); alternate cross-link. Position 177 is an N6-acetyllysine; alternate (lysine 177).

It belongs to the eukaryotic ribosomal protein eL13 family. As to quaternary structure, component of the 60S large ribosomal subunit (LSU).

It localises to the cytoplasm. In terms of biological role, component of the ribosome, a large ribonucleoprotein complex responsible for the synthesis of proteins in the cell. The small ribosomal subunit (SSU) binds messenger RNAs (mRNAs) and translates the encoded message by selecting cognate aminoacyl-transfer RNA (tRNA) molecules. The large subunit (LSU) contains the ribosomal catalytic site termed the peptidyl transferase center (PTC), which catalyzes the formation of peptide bonds, thereby polymerizing the amino acids delivered by tRNAs into a polypeptide chain. The nascent polypeptides leave the ribosome through a tunnel in the LSU and interact with protein factors that function in enzymatic processing, targeting, and the membrane insertion of nascent chains at the exit of the ribosomal tunnel. As part of the LSU, it is probably required for its formation and the maturation of rRNAs. Plays a role in bone development. The polypeptide is Large ribosomal subunit protein eL13 (RPL13) (Bos taurus (Bovine)).